The primary structure comprises 422 residues: Probable Na(+)/H(+) antiporter 2 (422 aa).

The next 13 membrane-spanning stretches (helical) occupy residues 3–23, 28–48, 52–72, 93–113, 119–139, 157–177, 183–203, 216–236, 242–262, 281–301, 307–327, 341–361, and 384–404; these read IVLF…IAKI, GIPD…LNVI, IVES…LFIG, ILAL…VFHL, IGLL…IPIF, VFND…LGLA, ILEF…AGKF, YIAP…EGIF, YEIS…NVIV, LSIF…SIPL, LPAF…GVLI, IYLA…AMVY, and LAGT…VLEA.

This sequence belongs to the monovalent cation:proton antiporter 1 (CPA1) transporter (TC 2.A.36) family.

The protein localises to the cell membrane. Its function is as follows. This is probably a Na(+)/H(+) antiporter. The chain is Probable Na(+)/H(+) antiporter 2 from Methanocaldococcus jannaschii (strain ATCC 43067 / DSM 2661 / JAL-1 / JCM 10045 / NBRC 100440) (Methanococcus jannaschii).